The primary structure comprises 259 residues: Glutamate 5-kinase (259 aa).

ATP is bound at residue lysine 18. Residues serine 54, aspartate 141, and asparagine 153 each coordinate substrate. Residue 173–174 (SD) participates in ATP binding.

This sequence belongs to the glutamate 5-kinase family.

It localises to the cytoplasm. It carries out the reaction L-glutamate + ATP = L-glutamyl 5-phosphate + ADP. The protein operates within amino-acid biosynthesis; L-proline biosynthesis; L-glutamate 5-semialdehyde from L-glutamate: step 1/2. Catalyzes the transfer of a phosphate group to glutamate to form L-glutamate 5-phosphate. The polypeptide is Glutamate 5-kinase (Clavibacter sepedonicus (Clavibacter michiganensis subsp. sepedonicus)).